Consider the following 258-residue polypeptide: Hydroxyacylglutathione hydrolase (258 aa).

Zn(2+) is bound by residues His-55, His-57, Asp-59, His-60, His-115, Asp-132, and His-170.

Belongs to the metallo-beta-lactamase superfamily. Glyoxalase II family. As to quaternary structure, monomer. It depends on Zn(2+) as a cofactor.

It carries out the reaction an S-(2-hydroxyacyl)glutathione + H2O = a 2-hydroxy carboxylate + glutathione + H(+). Its pathway is secondary metabolite metabolism; methylglyoxal degradation; (R)-lactate from methylglyoxal: step 2/2. In terms of biological role, thiolesterase that catalyzes the hydrolysis of S-D-lactoyl-glutathione to form glutathione and D-lactic acid. The sequence is that of Hydroxyacylglutathione hydrolase from Shewanella halifaxensis (strain HAW-EB4).